We begin with the raw amino-acid sequence, 885 residues long: MSASTRNKHSKIHGNEKLDISNDEFDRIRDALKNEEFRKLFFDYVDEIQDPENRKIYEEEITQLEKERGVDVTFIHPQPGFVIKTSIDGELKCFINIASCKVVERPNNEVSVNSQTGQKGLSWSIPLAQIPPRDDLDANNKLCKVYDVVFHPDALHLAKRNAQFRQCLIDTALDGVEREYHVNLDRANLKFPKLDYKGMARPSVLRTLSKNPTAEEKEPHPLEHMYPKKPEADAGQSKVLPMKTKVTAVPKFAVPKYCIKHSHDVDMAEYTDELDAKLQVTVPRALVVEIELPLLSSTADCHLDVTEKSVYLLSEKQGAKYKLKVDLPYTVNDKAGNARFDTDHRCLRITLPVVRSTPREERNLHDTVRNLSREDSGVELNSNGESPVEDEELVVELSEHNQENDSNAFPPTAVVSPRSFLKSNLHYLLPAQFNCNILDNVIVFVLHVTNVQPDSVQTLQQARSLHLQFASMGTGYYPTHYAFLMQLPDGVQPELRIDQVEVDTGDENVVLRLTMNEHCMLLPSYLAGTDSNDLKEYPVFGHQNNNNEKETEVEVAEMEKCDLVSEKSLQINMDHNDVEHALEVTIEPQENEAPLDSLELLHEHQQELQQLHHQKKLNKKQRKRNKKQRSLSESACEDLKLAQEHHEQPMDTLKLPHRKQRSYSECNESSLGSSCVQRGILKRFSRYGPHPSISDSCSSIDDCSSTYSCSVDAAGTGFSQSFGSIPEERGGDEAGLSESCKKTVRFNDHIMKQVFRLDSSILGQRKKNQKRRDCKLRAQQRRLSEGDSADYVEVDSTHGSGDQPAHKTAANAQYFKQHNNNHPHVKDNKKQSLHDSGLDLTNGSINNKNNHSNENATKRNEADAKNTMMFEMDDVDEEAQDAANI.

6 disordered regions span residues 208–235 (LSKNPTAEEKEPHPLEHMYPKKPEADAG), 371–390 (LSREDSGVELNSNGESPVED), 607–636 (ELQQLHHQKKLNKKQRKRNKKQRSLSESAC), 644–663 (EHHEQPMDTLKLPHRKQRSY), 781–806 (RRLSEGDSADYVEVDSTHGSGDQPAH), and 819–871 (NNNH…MMFE). A compositionally biased stretch (basic and acidic residues) spans 213 to 232 (TAEEKEPHPLEHMYPKKPEA). Ser376 bears the Phosphoserine mark. Positions 612-629 (HHQKKLNKKQRKRNKKQR) are enriched in basic residues. Ser784 is subject to Phosphoserine. Residues 824–837 (HVKDNKKQSLHDSG) are compositionally biased toward basic and acidic residues. Low complexity predominate over residues 842–855 (NGSINNKNNHSNEN).

Belongs to the PIH1 family. Kintoun subfamily. In terms of assembly, interacts with Pp1alpha-96A, Pp1-87B, Pp1-13C and flw.

The protein resides in the cytoplasm. In terms of biological role, required for cytoplasmic pre-assembly of axonemal dyneins, thereby playing a central role in motility in cilia and flagella. Involved in pre-assembly of dynein arm complexes in the cytoplasm before intraflagellar transport loads them for the ciliary compartment. This chain is Protein kintoun, found in Drosophila mojavensis (Fruit fly).